Consider the following 465-residue polypeptide: uncharacterized protein (465 aa).

The chain crosses the membrane as a helical span at residues 56 to 76; sequence ILYMIIFAIFGLLPFLIALIF. The disordered stretch occupies residues 177 to 198; sequence KFNKSKKSNKINDKTPILNNNN. Residues 273 to 293 traverse the membrane as a helical segment; sequence LIFLLVSTILLIALIGFILII. Positions 411 to 449 are disordered; it reads NNYNNSNNNNNSNNSNSNNNNNNNNNNNNYNNNNYNNNN.

Its subcellular location is the membrane. This is an uncharacterized protein from Dictyostelium discoideum (Social amoeba).